Consider the following 914-residue polypeptide: Probable dipeptidyl-aminopeptidase B (914 aa).

Basic and acidic residues predominate over residues methionine 1–serine 10. Residues methionine 1–arginine 63 are disordered. Over methionine 1–arginine 91 the chain is Cytoplasmic. Residues serine 20–serine 35 are compositionally biased toward low complexity. A compositionally biased stretch (polar residues) spans glutamine 45–methionine 56. A helical; Signal-anchor for type II membrane protein membrane pass occupies residues isoleucine 92–leucine 112. At threonine 113–valine 914 the chain is on the vacuolar side. Residues asparagine 348, asparagine 565, and asparagine 639 are each glycosylated (N-linked (GlcNAc...) asparagine). Serine 753 functions as the Charge relay system in the catalytic mechanism. Residue asparagine 807 is glycosylated (N-linked (GlcNAc...) asparagine). Residues aspartate 830 and histidine 863 each act as charge relay system in the active site.

Belongs to the peptidase S9B family.

It localises to the vacuole membrane. The enzyme catalyses Release of an N-terminal dipeptide, Xaa-Yaa-|-Zaa-, from a polypeptide, preferentially when Yaa is Pro, provided Zaa is neither Pro nor hydroxyproline.. Type IV dipeptidyl-peptidase which removes N-terminal dipeptides sequentially from polypeptides having unsubstituted N-termini provided that the penultimate residue is proline. The polypeptide is Probable dipeptidyl-aminopeptidase B (dapB) (Aspergillus clavatus (strain ATCC 1007 / CBS 513.65 / DSM 816 / NCTC 3887 / NRRL 1 / QM 1276 / 107)).